The chain runs to 113 residues: Putative pterin-4-alpha-carbinolamine dehydratase (113 aa).

Belongs to the pterin-4-alpha-carbinolamine dehydratase family.

It catalyses the reaction (4aS,6R)-4a-hydroxy-L-erythro-5,6,7,8-tetrahydrobiopterin = (6R)-L-erythro-6,7-dihydrobiopterin + H2O. This chain is Putative pterin-4-alpha-carbinolamine dehydratase, found in Hydrogenovibrio crunogenus (strain DSM 25203 / XCL-2) (Thiomicrospira crunogena).